The following is a 127-amino-acid chain: Protein yippee-like 4 (127 aa).

The region spanning 27 to 124 is the Yippee domain; that stretch reads RTYSCVHCRA…IEMSHMVKDN (98 aa). Zn(2+) contacts are provided by Cys31, Cys34, Cys87, and Cys90. 2 positions are modified to phosphothreonine: Thr92 and Thr93. Tyr98 bears the Phosphotyrosine mark.

The protein belongs to the yippee family. As to expression, detected in brain, spleen and testis.

It localises to the nucleus. The protein localises to the nucleolus. The chain is Protein yippee-like 4 (Ypel4) from Mus musculus (Mouse).